The chain runs to 178 residues: Transmembrane protein 196 (178 aa).

Helical transmembrane passes span 11 to 31, 47 to 67, 73 to 93, and 106 to 126; these read LLVLSVLEIGLGVSSVAVGAV, SSPVWSGVCFLLCGICGILCA, LVMILFSACCICGLIGGILNF, and LYPLHLASMSLACIGIGGCTL.

As to expression, expression is significantly decreased in lung cancer cells compared to normal lung tissue (at protein level).

The protein localises to the cytoplasm. It is found in the membrane. In terms of biological role, acts as a tumor suppressor in lung cancer. Inhibits tumor cell growth by inhibiting cell proliferation and migration and promoting cell apoptosis. Inhibits metastasis of lung cancer by suppressing beta-catenin expression in the Wnt/beta-catenin signaling pathway. This chain is Transmembrane protein 196 (TMEM196), found in Homo sapiens (Human).